The sequence spans 423 residues: SH2 domain-containing adapter protein F (423 aa).

Disordered stretches follow at residues 1–87 (MQQE…STTR), 110–208 (DPFD…WEWK), and 225–312 (DLPW…GEWT). Over residues 192-203 (EDDERPPEEYDQ) the composition is skewed to acidic residues. Tyrosine 201 is subject to Phosphotyrosine. Positions 323–418 (WYHGAISRTD…AEHMSLLYPV (96 aa)) constitute an SH2 domain.

In terms of assembly, interacts with phosphorylated 'Tyr-720' of PDGFRA via its SH2 domain. In terms of processing, may become phosphorylated upon binding to PDGFRA. As to expression, expressed in skeletal muscle, brain, liver, prostate, testis, ovary, small intestine and colon.

Functionally, adapter protein which may play a role in the regulation of apoptosis in response to PDGF. In Homo sapiens (Human), this protein is SH2 domain-containing adapter protein F.